The chain runs to 88 residues: MANTTSAKKATRKIARRSAVNKARRSRIRSFVRKVEEAIASGDQALAAAALKAAQPELMRAATKGVMHSNTASRKVSRLAQRVKSLSA.

Disordered regions lie at residues 1–23 (MANTTSAKKATRKIARRSAVNKA) and 65–88 (GVMHSNTASRKVSRLAQRVKSLSA).

Belongs to the bacterial ribosomal protein bS20 family.

Binds directly to 16S ribosomal RNA. The polypeptide is Small ribosomal subunit protein bS20 (Rhizobium meliloti (strain 1021) (Ensifer meliloti)).